Consider the following 180-residue polypeptide: Adenine phosphoribosyltransferase (180 aa).

At Ser2 the chain carries N-acetylserine. Ser4, Ser15, and Ser30 each carry phosphoserine. Phosphotyrosine is present on Tyr60. Ser66 carries the phosphoserine modification. N6-acetyllysine is present on Lys114. The residue at position 135 (Thr135) is a Phosphothreonine.

This sequence belongs to the purine/pyrimidine phosphoribosyltransferase family. As to quaternary structure, homodimer.

It is found in the cytoplasm. The enzyme catalyses AMP + diphosphate = 5-phospho-alpha-D-ribose 1-diphosphate + adenine. It participates in purine metabolism; AMP biosynthesis via salvage pathway; AMP from adenine: step 1/1. Its function is as follows. Catalyzes a salvage reaction resulting in the formation of AMP, that is energically less costly than de novo synthesis. The protein is Adenine phosphoribosyltransferase of Rattus norvegicus (Rat).